The sequence spans 290 residues: Pyridoxal kinase PdxY (290 aa).

Substrate is bound by residues Ser12 and 47-48 (TQ). ATP is bound by residues Asp114, Glu151, Lys184, and 211–214 (RPLL). Substrate is bound at residue Asp225.

Belongs to the pyridoxine kinase family. PdxY subfamily. Homodimer. Requires Mg(2+) as cofactor.

It catalyses the reaction pyridoxal + ATP = pyridoxal 5'-phosphate + ADP + H(+). Its pathway is cofactor metabolism; pyridoxal 5'-phosphate salvage; pyridoxal 5'-phosphate from pyridoxal: step 1/1. Functionally, pyridoxal kinase involved in the salvage pathway of pyridoxal 5'-phosphate (PLP). Catalyzes the phosphorylation of pyridoxal to PLP. This is Pyridoxal kinase PdxY from Pseudomonas fluorescens (strain Pf0-1).